The chain runs to 460 residues: ATP synthase subunit beta (460 aa).

G150–T157 contacts ATP.

Belongs to the ATPase alpha/beta chains family. As to quaternary structure, F-type ATPases have 2 components, CF(1) - the catalytic core - and CF(0) - the membrane proton channel. CF(1) has five subunits: alpha(3), beta(3), gamma(1), delta(1), epsilon(1). CF(0) has three main subunits: a(1), b(2) and c(9-12). The alpha and beta chains form an alternating ring which encloses part of the gamma chain. CF(1) is attached to CF(0) by a central stalk formed by the gamma and epsilon chains, while a peripheral stalk is formed by the delta and b chains.

It is found in the cell inner membrane. It carries out the reaction ATP + H2O + 4 H(+)(in) = ADP + phosphate + 5 H(+)(out). Its function is as follows. Produces ATP from ADP in the presence of a proton gradient across the membrane. The catalytic sites are hosted primarily by the beta subunits. This is ATP synthase subunit beta from Proteus mirabilis (strain HI4320).